A 145-amino-acid polypeptide reads, in one-letter code: Plastocyanin, chloroplastic (145 aa).

The transit peptide at 1–48 (MASLMRKAAVAPAKATRTTVKASASLQRVAQAAGVAVAGFSLALSANA) directs the protein to the chloroplast. One can recognise a Plastocyanin-like domain in the interval 49-145 (ANVKLGADSG…AGMVGKVIVQ (97 aa)). Cu cation is bound by residues His85, Cys130, His133, and Met138.

The protein belongs to the plastocyanin family. Cu(2+) is required as a cofactor.

It localises to the plastid. Its subcellular location is the chloroplast thylakoid membrane. In terms of biological role, participates in electron transfer between P700 and the cytochrome b6-f complex in photosystem I. This chain is Plastocyanin, chloroplastic (PETE), found in Tetradesmus obliquus (Green alga).